Reading from the N-terminus, the 331-residue chain is 5-formaminoimidazole-4-carboxamide-1-(beta)-D-ribofuranosyl 5'-monophosphate synthetase (331 aa).

5-amino-1-(5-phospho-beta-D-ribosyl)imidazole-4-carboxamide is bound by residues His-9 and Ser-69. Positions 76–322 (VELVEKMKVP…IAMELKQGLE (247 aa)) constitute an ATP-grasp domain. ATP is bound by residues 120–179 (PDDI…VPVY) and Glu-201. Asn-229 contributes to the 5-amino-1-(5-phospho-beta-D-ribosyl)imidazole-4-carboxamide binding site. Mg(2+)-binding residues include Glu-267 and Glu-280.

Belongs to the phosphohexose mutase family. It depends on Mg(2+) as a cofactor. Mn(2+) serves as cofactor.

The catalysed reaction is 5-amino-1-(5-phospho-beta-D-ribosyl)imidazole-4-carboxamide + formate + ATP = 5-formamido-1-(5-phospho-D-ribosyl)imidazole-4-carboxamide + ADP + phosphate. The protein operates within purine metabolism; IMP biosynthesis via de novo pathway; 5-formamido-1-(5-phospho-D-ribosyl)imidazole-4-carboxamide from 5-amino-1-(5-phospho-D-ribosyl)imidazole-4-carboxamide (formate route): step 1/1. In terms of biological role, catalyzes the ATP- and formate-dependent formylation of 5-aminoimidazole-4-carboxamide-1-beta-d-ribofuranosyl 5'-monophosphate (AICAR) to 5-formaminoimidazole-4-carboxamide-1-beta-d-ribofuranosyl 5'-monophosphate (FAICAR) in the absence of folates. In Thermococcus kodakarensis (strain ATCC BAA-918 / JCM 12380 / KOD1) (Pyrococcus kodakaraensis (strain KOD1)), this protein is 5-formaminoimidazole-4-carboxamide-1-(beta)-D-ribofuranosyl 5'-monophosphate synthetase.